The primary structure comprises 145 residues: 3-hydroxyacyl-[acyl-carrier-protein] dehydratase FabZ (145 aa).

His-48 is an active-site residue.

This sequence belongs to the thioester dehydratase family. FabZ subfamily.

It localises to the cytoplasm. The catalysed reaction is a (3R)-hydroxyacyl-[ACP] = a (2E)-enoyl-[ACP] + H2O. Functionally, involved in unsaturated fatty acids biosynthesis. Catalyzes the dehydration of short chain beta-hydroxyacyl-ACPs and long chain saturated and unsaturated beta-hydroxyacyl-ACPs. This chain is 3-hydroxyacyl-[acyl-carrier-protein] dehydratase FabZ, found in Geobacillus sp. (strain WCH70).